Here is a 239-residue protein sequence, read N- to C-terminus: Isopentenyl-diphosphate Delta-isomerase (239 aa).

Substrate is bound at residue lysine 43. Residues histidine 47 and histidine 58 each coordinate Mg(2+). Residues 56-210 (LLHRAFSIFL…KVKVTPWFRL (155 aa)) enclose the Nudix hydrolase domain. Substrate is bound by residues arginine 77 and lysine 81. The active site involves cysteine 93. Serine 94 contributes to the substrate binding site. Mg(2+)-binding residues include glutamate 156 and glutamate 158. Glutamate 158 is an active-site residue.

It belongs to the IPP isomerase type 1 family. Requires Mg(2+) as cofactor.

It carries out the reaction isopentenyl diphosphate = dimethylallyl diphosphate. It functions in the pathway isoprenoid biosynthesis; dimethylallyl diphosphate biosynthesis; dimethylallyl diphosphate from isopentenyl diphosphate: step 1/1. Its function is as follows. Catalyzes the 1,3-allylic rearrangement of the homoallylic substrate isopentenyl (IPP) to its highly electrophilic allylic isomer, dimethylallyl diphosphate (DMAPP). This is Isopentenyl-diphosphate Delta-isomerase (ipi) from Dictyostelium discoideum (Social amoeba).